The following is a 227-amino-acid chain: Phosphoglycolate phosphatase (227 aa).

Residue Asp11 is the Nucleophile of the active site. Asp11, Asp13, and Asp176 together coordinate Mg(2+).

The protein belongs to the HAD-like hydrolase superfamily. CbbY/CbbZ/Gph/YieH family. Mg(2+) is required as a cofactor.

It carries out the reaction 2-phosphoglycolate + H2O = glycolate + phosphate. Its pathway is organic acid metabolism; glycolate biosynthesis; glycolate from 2-phosphoglycolate: step 1/1. Specifically catalyzes the dephosphorylation of 2-phosphoglycolate. Is involved in the dissimilation of the intracellular 2-phosphoglycolate formed during the DNA repair of 3'-phosphoglycolate ends, a major class of DNA lesions induced by oxidative stress. The chain is Phosphoglycolate phosphatase from Aliivibrio fischeri (strain ATCC 700601 / ES114) (Vibrio fischeri).